Consider the following 144-residue polypeptide: Cytochrome c oxidase subunit 4 isoform 1, mitochondrial (144 aa).

Topologically, residues 1-73 are mitochondrial matrix; sequence SVVKSEDFSL…SFAEMNRGSN (73 aa). Residue lysine 4 is modified to N6-acetyllysine; alternate. At lysine 4 the chain carries N6-succinyllysine; alternate. Lysine 28 is modified (N6-acetyllysine). Serine 31 and serine 33 each carry phosphoserine. N6-acetyllysine; alternate is present on lysine 35. An N6-succinyllysine; alternate modification is found at lysine 35. Lysine 42 carries the N6-acetyllysine modification. The helical transmembrane segment at 74–99 threads the bilayer; the sequence is EWKTVVGGAMFFIGFTALVIMWQKHY. Residues 100–144 lie on the Mitochondrial intermembrane side of the membrane; the sequence is VYGPLPQSFDKEWVAKQTKRMLDMKVNPIQGLASKWDYEKNEWKK.

It belongs to the cytochrome c oxidase IV family. As to quaternary structure, component of the cytochrome c oxidase (complex IV, CIV), a multisubunit enzyme composed of 14 subunits. The complex is composed of a catalytic core of 3 subunits MT-CO1, MT-CO2 and MT-CO3, encoded in the mitochondrial DNA, and 11 supernumerary subunits COX4I, COX5A, COX5B, COX6A, COX6B, COX6C, COX7A, COX7B, COX7C, COX8 and NDUFA4, which are encoded in the nuclear genome. The complex exists as a monomer or a dimer and forms supercomplexes (SCs) in the inner mitochondrial membrane with NADH-ubiquinone oxidoreductase (complex I, CI) and ubiquinol-cytochrome c oxidoreductase (cytochrome b-c1 complex, complex III, CIII), resulting in different assemblies (supercomplex SCI(1)III(2)IV(1) and megacomplex MCI(2)III(2)IV(2)). Interacts with PHB2; the interaction decreases in absence of SPHK2. Interacts with AFG1L. Interacts with ABCB7; this interaction allows the regulation of cellular iron homeostasis and cellular reactive oxygen species (ROS) levels in cardiomyocytes. Interacts with FLVCR2; this interaction occurs in the absence of heme and is disrupted upon heme binding. Interacts with IRGC.

The protein localises to the mitochondrion inner membrane. The protein operates within energy metabolism; oxidative phosphorylation. Component of the cytochrome c oxidase, the last enzyme in the mitochondrial electron transport chain which drives oxidative phosphorylation. The respiratory chain contains 3 multisubunit complexes succinate dehydrogenase (complex II, CII), ubiquinol-cytochrome c oxidoreductase (cytochrome b-c1 complex, complex III, CIII) and cytochrome c oxidase (complex IV, CIV), that cooperate to transfer electrons derived from NADH and succinate to molecular oxygen, creating an electrochemical gradient over the inner membrane that drives transmembrane transport and the ATP synthase. Cytochrome c oxidase is the component of the respiratory chain that catalyzes the reduction of oxygen to water. Electrons originating from reduced cytochrome c in the intermembrane space (IMS) are transferred via the dinuclear copper A center (CU(A)) of subunit 2 and heme A of subunit 1 to the active site in subunit 1, a binuclear center (BNC) formed by heme A3 and copper B (CU(B)). The BNC reduces molecular oxygen to 2 water molecules using 4 electrons from cytochrome c in the IMS and 4 protons from the mitochondrial matrix. This chain is Cytochrome c oxidase subunit 4 isoform 1, mitochondrial (COX4I1), found in Pan troglodytes (Chimpanzee).